The primary structure comprises 1113 residues: StAR-related lipid transfer protein 13 (1113 aa).

The residue at position 1 (M1) is an N-acetylmethionine. An SAM domain is found at Q55–D122. Disordered regions lie at residues P164 to D218, S230 to A256, and N308 to S343. Residues N179 to T188 show a composition bias toward polar residues. The segment covering S197–H214 has biased composition (low complexity). The span at S230–H245 shows a compositional bias: polar residues. The segment covering G322–S340 has biased composition (low complexity). The residue at position 411 (S411) is a Phosphoserine. Composition is skewed to polar residues over residues S421–R435 and P529–S549. Disordered regions lie at residues S421–E443 and H514–L578. Residues V663–F868 form the Rho-GAP domain. One can recognise an START domain in the interval L899–P1109.

As to quaternary structure, homodimer. Interacts with TAX1BP1.

It is found in the cytoplasm. The protein resides in the membrane. It localises to the mitochondrion membrane. Its subcellular location is the lipid droplet. In terms of biological role, may function as a GTPase-activating protein. The polypeptide is StAR-related lipid transfer protein 13 (Stard13) (Mus musculus (Mouse)).